We begin with the raw amino-acid sequence, 384 residues long: MNLSLLTKSSCEKIIDLDFPKNIETIVSNNLSALVDNMLIASKKQINLTHYEPDIYLLKNVFINFDENLNNVFDSKFQHDVKLMTEVYGFKMNINDQIININILTTNNKKGYVVALIHAINTFCHMFPYEYHGLTMYICLDDNTRNIDFDPSNYSLDDMFKRLHKESGAFNVSGMTQRSSKKIVLTKSEEIVKLMFHEMVHYIGLDQKLLSINKSYNWNLINQRLNISEAYTEFLSVLLNSSYEAIYFMVSTDSNVHNTFQKILSKETTYSVWLSSYILKLYGYNSHNLHEFFSGQNLQPKYSPIPSWEYIILRTQLLLNINEMNEFFPENLKINNLNLDKFLSLIEINNDFIELIKSFIFSITNLRKNISYNLIDINWNCLLV.

This is an uncharacterized protein from Acanthamoeba polyphaga (Amoeba).